The sequence spans 173 residues: Small ribosomal subunit protein uS10m (173 aa).

The protein belongs to the universal ribosomal protein uS10 family. As to quaternary structure, component of the mitochondrial ribosome small subunit (28S) which comprises a 12S rRNA and about 30 distinct proteins.

It localises to the mitochondrion. The sequence is that of Small ribosomal subunit protein uS10m (mRpS10) from Drosophila melanogaster (Fruit fly).